Here is a 352-residue protein sequence, read N- to C-terminus: MAEKKTDKVKRLTELSHCAGCAAKLRASDLAQVLGGLKSTKGPQALVGFSTNDDAAVYRLAPGMAVVETVDFFPPVVDDPFQFGAIAAANALSDIYAMGARPLFALNLVCFPDELPLKVLSKILAGGQSKADEAGIPILGGHSIRDPEPKFGMAVTGVVHPKKVLTNAGAKPGDVLFLTKPLGSGIATTAIKRGVASKQLAKRALGVMTTLNRAAGEVFASGKFKVNALTDVTGYGLLGHLLEMMTAAKARATLDLERIPLIAEVPALAEDGVVPGGTKSNLAHVHKKVRFPEGLPECIQWVLADAQTNGGLLASVPARQALKALKALEAAGVDAALIGEVQAGKPGIDVVG.

C21 is an active-site residue. ATP is bound by residues K24 and 51 to 53 (TND). D54 provides a ligand contact to Mg(2+). Residues D71, D94, and 141 to 143 (GHS) each bind ATP. D94 provides a ligand contact to Mg(2+). A Mg(2+)-binding site is contributed by D231.

Belongs to the selenophosphate synthase 1 family. Class I subfamily. Homodimer. Mg(2+) is required as a cofactor.

The catalysed reaction is hydrogenselenide + ATP + H2O = selenophosphate + AMP + phosphate + 2 H(+). In terms of biological role, synthesizes selenophosphate from selenide and ATP. The polypeptide is Selenide, water dikinase (Myxococcus xanthus (strain DK1622)).